The chain runs to 1154 residues: Large proline-rich protein BAG6 (1154 aa).

Residue M1 is modified to N-acetylmethionine. The Ubiquitin-like domain maps to 17–92; sequence LEVLVKTLDS…HLVERAPPQT (76 aa). Disordered stretches follow at residues 87–125, 186–274, 387–442, 463–531, and 568–626; these read RAPP…ASVH, RGGT…HPSP, TMTG…SSHP, QDSG…QGAG, and AQAQ…SAAD. S96 carries the post-translational modification Phosphoserine. The segment covering 96–112 has biased composition (low complexity); that stretch reads SGASSGTGSASATHGGA. A Phosphothreonine modification is found at T117. Polar residues predominate over residues 209–218; that stretch reads VALNSQTSEP. Residues 237–271 form repeat 1; sequence RPPTQTPELAPSGPAPAGPAPAGPAPAPETNAPNH. The segment at 237–658 is 4 X 29 AA approximate repeats; the sequence is RPPTQTPELA…MASPTITVAM (422 aa). Positions 249–263 are enriched in pro residues; that stretch reads GPAPAGPAPAGPAPA. The span at 400–409 shows a compositional bias: low complexity; it reads GAEAATPGSA. The span at 410–426 shows a compositional bias: polar residues; it reads QATSLPPSSTTVDSSTE. Repeat unit 2 spans residues 416–444; sequence PSSTTVDSSTEGAPPPGPAPPPASSHPRV. Composition is skewed to pro residues over residues 428 to 439 and 508 to 521; these read APPPGPAPPPAS and PTPP…PGGP. Composition is skewed to low complexity over residues 568–581 and 591–609; these read AQAQ…AQAP and PATA…TAGP. 2 consecutive repeat copies span residues 597-624 and 630-658. Positions 611–622 are enriched in pro residues; sequence PGGPAQPPPPQP. Disordered stretches follow at residues 673–719 and 968–1154; these read QASQ…ESLP and PPQT…ADDP. A compositionally biased stretch (pro residues) spans 678-702; that stretch reads APPPPPPPPPPPPAPEQQSTPPPGS. 2 positions are modified to phosphoserine: S986 and S995. Positions 1029 to 1042 are enriched in low complexity; sequence AEPWAAAVPPEWVP. A required for interaction with GET4 region spans residues 1032-1062; it reads WAAAVPPEWVPIIQQDIQSQRKVKPQPPLSD. The Nuclear localization site motif lies at 1034–1076; sequence AAVPPEWVPIIQQDIQSQRKVKPQPPLSDAYLSGMPAKRRKTM. The segment at 1044 to 1154 is sufficient for the delivery of client proteins to the endoplasmic reticulum; the sequence is IQQDIQSQRK…NAHRAFADDP (111 aa). T1075 is subject to Phosphothreonine. Positions 1080-1137 are BAG-similar domain, required and sufficient for interaction with UBL4A; that stretch reads GPQLLLSEAVSRAAKAAGARPLTSPESLSRDLEAPEVQESYRQQLRSDIQKRLQEDPN. The span at 1088 to 1098 shows a compositional bias: low complexity; it reads AVSRAAKAAGA. A phosphoserine mark is found at S1103 and S1139.

In terms of assembly, component of the BAG6/BAT3 complex, also named BAT3 complex, at least composed of BAG6, UBL4A and GET4/TRC35. Interacts with GET4; the interaction is direct and localizes BAG6 in the cytosol. Interacts with UBL4A; the interaction is direct and required for UBL4A protein stability. Interacts with AIFM1. Interacts with HSPA2. Interacts with CTCFL. Interacts with p300/EP300. Interacts (via ubiquitin-like domain) with RNF126; required for BAG6-dependent ubiquitination of proteins mislocalized to the cytosol. Interacts (via ubiquitin-like domain) with SGTA; SGTA competes with RNF126 by binding the same region of BAG6, thereby promoting deubiquitination of BAG6-target proteins and rescuing them from degradation. Interacts with ricin A chain. Interacts with VCP and AMFR; both form the VCP/p97-AMFR/gp78 complex. Interacts with SYVN1. Interacts with USP13; the interaction is direct and may mediate UBL4A deubiquitination. Interacts with ZFAND2B. Interacts with KPNA2. Interacts with UBQLN4. Post-translationally, ricin can induce a cleavage by the caspase CASP3. The released C-terminal peptide induces apoptosis.

It is found in the cytoplasm. Its subcellular location is the cytosol. The protein resides in the nucleus. It localises to the secreted. The protein localises to the extracellular exosome. ATP-independent molecular chaperone preventing the aggregation of misfolded and hydrophobic patches-containing proteins. Functions as part of a cytosolic protein quality control complex, the BAG6/BAT3 complex, which maintains these client proteins in a soluble state and participates in their proper delivery to the endoplasmic reticulum or alternatively can promote their sorting to the proteasome where they undergo degradation. The BAG6/BAT3 complex is involved in the post-translational delivery of tail-anchored/type II transmembrane proteins to the endoplasmic reticulum membrane. Recruited to ribosomes, it interacts with the transmembrane region of newly synthesized tail-anchored proteins and together with SGTA and ASNA1 mediates their delivery to the endoplasmic reticulum. Client proteins that cannot be properly delivered to the endoplasmic reticulum are ubiquitinated by RNF126, an E3 ubiquitin-protein ligase associated with BAG6 and are sorted to the proteasome. SGTA which prevents the recruitment of RNF126 to BAG6 may negatively regulate the ubiquitination and the proteasomal degradation of client proteins. Similarly, the BAG6/BAT3 complex also functions as a sorting platform for proteins of the secretory pathway that are mislocalized to the cytosol either delivering them to the proteasome for degradation or to the endoplasmic reticulum. The BAG6/BAT3 complex also plays a role in the endoplasmic reticulum-associated degradation (ERAD), a quality control mechanism that eliminates unwanted proteins of the endoplasmic reticulum through their retrotranslocation to the cytosol and their targeting to the proteasome. It maintains these retrotranslocated proteins in an unfolded yet soluble state condition in the cytosol to ensure their proper delivery to the proteasome. BAG6 is also required for selective ubiquitin-mediated degradation of defective nascent chain polypeptides by the proteasome. In this context, it may participate in the production of antigenic peptides and play a role in antigen presentation in immune response. BAG6 is also involved in endoplasmic reticulum stress-induced pre-emptive quality control, a mechanism that selectively attenuates the translocation of newly synthesized proteins into the endoplasmic reticulum and reroutes them to the cytosol for proteasomal degradation. BAG6 may ensure the proper degradation of these proteins and thereby protects the endoplasmic reticulum from protein overload upon stress. By inhibiting the polyubiquitination and subsequent proteasomal degradation of HSPA2 it may also play a role in the assembly of the synaptonemal complex during spermatogenesis. Also positively regulates apoptosis by interacting with and stabilizing the proapoptotic factor AIFM1. By controlling the steady-state expression of the IGF1R receptor, indirectly regulates the insulin-like growth factor receptor signaling pathway. Its function is as follows. Involved in DNA damage-induced apoptosis: following DNA damage, accumulates in the nucleus and forms a complex with p300/EP300, enhancing p300/EP300-mediated p53/TP53 acetylation leading to increase p53/TP53 transcriptional activity. When nuclear, may also act as a component of some chromatin regulator complex that regulates histone 3 'Lys-4' dimethylation (H3K4me2). In terms of biological role, released extracellularly via exosomes, it is a ligand of the natural killer/NK cells receptor NCR3 and stimulates NK cells cytotoxicity. It may thereby trigger NK cells cytotoxicity against neighboring tumor cells and immature myeloid dendritic cells (DC). Functionally, may mediate ricin-induced apoptosis. This is Large proline-rich protein BAG6 from Mus musculus (Mouse).